A 136-amino-acid chain; its full sequence is Large ribosomal subunit protein eL27A (136 aa).

Belongs to the eukaryotic ribosomal protein eL27 family. Component of the large ribosomal subunit (LSU). Mature yeast ribosomes consist of a small (40S) and a large (60S) subunit. The 40S small subunit contains 1 molecule of ribosomal RNA (18S rRNA) and at least 33 different proteins. The large 60S subunit contains 3 rRNA molecules (25S, 5.8S and 5S rRNA) and at least 46 different proteins.

Its subcellular location is the cytoplasm. The protein localises to the nucleus. Its function is as follows. Component of the ribosome, a large ribonucleoprotein complex responsible for the synthesis of proteins in the cell. The small ribosomal subunit (SSU) binds messenger RNAs (mRNAs) and translates the encoded message by selecting cognate aminoacyl-transfer RNA (tRNA) molecules. The large subunit (LSU) contains the ribosomal catalytic site termed the peptidyl transferase center (PTC), which catalyzes the formation of peptide bonds, thereby polymerizing the amino acids delivered by tRNAs into a polypeptide chain. The nascent polypeptides leave the ribosome through a tunnel in the LSU and interact with protein factors that function in enzymatic processing, targeting, and the membrane insertion of nascent chains at the exit of the ribosomal tunnel. The sequence is that of Large ribosomal subunit protein eL27A (rpl2701) from Schizosaccharomyces pombe (strain 972 / ATCC 24843) (Fission yeast).